The following is a 100-amino-acid chain: Small ubiquitin-related modifier 1 (100 aa).

A compositionally biased stretch (basic and acidic residues) spans M1–G12. Positions M1–K21 are disordered. Positions A16–G93 constitute a Ubiquitin-like domain. Residue G93 forms a Glycyl lysine isopeptide (Gly-Lys) (interchain with K-? in acceptor proteins) linkage.

It belongs to the ubiquitin family. SUMO subfamily. In terms of assembly, interacts with SAE2, SCE1, SIZ1 and MMS21. Interacts with HSFA2. Covalently attached to ABI5, FLD, GTE3, HSFA2 and ICE1.

The protein resides in the nucleus. It localises to the cytoplasm. Functionally, ubiquitin-like protein which can be covalently attached to target lysines as a monomer. Does not seem to be involved in protein degradation and may function as an antagonist of ubiquitin in the degradation process. Required for the massive protein sumoylation in the nucleus induced by heat shock and controlled by SIZ1. Involved in the regulation of the heat stress transcription factor HSFA2 in acquired thermotolerance. This chain is Small ubiquitin-related modifier 1, found in Arabidopsis thaliana (Mouse-ear cress).